Consider the following 358-residue polypeptide: Peroxidase 54 (358 aa).

A signal peptide spans 1 to 31 (MAVTSSSSTCDGFFIISLIVIVSSLFGTSSA). Q32 carries the post-translational modification Pyrrolidone carboxylic acid. Residues N34 and N44 are each glycosylated (N-linked (GlcNAc...) asparagine). 4 disulfides stabilise this stretch: C42–C122, C75–C80, C128–C330, and C207–C239. The active-site Proton acceptor is the H73. Positions 74, 77, 79, 81, and 83 each coordinate Ca(2+). N103, N161, and N166 each carry an N-linked (GlcNAc...) asparagine glycan. Substrate is bound at residue P170. N-linked (GlcNAc...) asparagine glycosylation is present at N178. H200 serves as a coordination point for heme b. T201 serves as a coordination point for Ca(2+). N-linked (GlcNAc...) asparagine glycans are attached at residues N218, N228, and N242. D252, T255, and D260 together coordinate Ca(2+). N298 carries an N-linked (GlcNAc...) asparagine glycan.

It belongs to the peroxidase family. Classical plant (class III) peroxidase subfamily. Heme b is required as a cofactor. It depends on Ca(2+) as a cofactor.

The protein localises to the secreted. It localises to the vacuole. It catalyses the reaction 2 a phenolic donor + H2O2 = 2 a phenolic radical donor + 2 H2O. In terms of biological role, removal of H(2)O(2), oxidation of toxic reductants, biosynthesis and degradation of lignin, suberization, auxin catabolism, response to environmental stresses such as wounding, pathogen attack and oxidative stress. These functions might be dependent on each isozyme/isoform in each plant tissue. The polypeptide is Peroxidase 54 (PER54) (Arabidopsis thaliana (Mouse-ear cress)).